A 174-amino-acid polypeptide reads, in one-letter code: dCTP deaminase, dUMP-forming (174 aa).

Residues 93 to 98, Asp-111, 119 to 121, Gln-138, and Tyr-151 each bind dCTP; these read RSSIGR and TLE. The active-site Proton donor/acceptor is the Glu-121.

Belongs to the dCTP deaminase family. As to quaternary structure, homotrimer.

It catalyses the reaction dCTP + 2 H2O = dUMP + NH4(+) + diphosphate. Its pathway is pyrimidine metabolism; dUMP biosynthesis; dUMP from dCTP: step 1/1. Its function is as follows. Bifunctional enzyme that catalyzes both the deamination of dCTP to dUTP and the hydrolysis of dUTP to dUMP without releasing the toxic dUTP intermediate. This chain is dCTP deaminase, dUMP-forming, found in Leptospira biflexa serovar Patoc (strain Patoc 1 / Ames).